A 156-amino-acid polypeptide reads, in one-letter code: ATP synthase subunit b (156 aa).

Residues Ala11–Ala31 traverse the membrane as a helical segment.

It belongs to the ATPase B chain family. As to quaternary structure, F-type ATPases have 2 components, F(1) - the catalytic core - and F(0) - the membrane proton channel. F(1) has five subunits: alpha(3), beta(3), gamma(1), delta(1), epsilon(1). F(0) has three main subunits: a(1), b(2) and c(10-14). The alpha and beta chains form an alternating ring which encloses part of the gamma chain. F(1) is attached to F(0) by a central stalk formed by the gamma and epsilon chains, while a peripheral stalk is formed by the delta and b chains.

It is found in the cell inner membrane. F(1)F(0) ATP synthase produces ATP from ADP in the presence of a proton or sodium gradient. F-type ATPases consist of two structural domains, F(1) containing the extramembraneous catalytic core and F(0) containing the membrane proton channel, linked together by a central stalk and a peripheral stalk. During catalysis, ATP synthesis in the catalytic domain of F(1) is coupled via a rotary mechanism of the central stalk subunits to proton translocation. Its function is as follows. Component of the F(0) channel, it forms part of the peripheral stalk, linking F(1) to F(0). This is ATP synthase subunit b from Photorhabdus laumondii subsp. laumondii (strain DSM 15139 / CIP 105565 / TT01) (Photorhabdus luminescens subsp. laumondii).